The chain runs to 532 residues: uncharacterized protein (532 aa).

The next 13 membrane-spanning stretches (helical) occupy residues 13 to 33 (MSLLIVLMAGLFLAILNQTLL), 53 to 73 (WLTTGYMLVNGVLIPLSAFLI), 80 to 100 (SLFLVAMFCFTLGTLVCGIAP), 111 to 131 (IQAVGGGILQPLVMTTILLIF), 142 to 162 (IFGLAMMFAPAVGPTLSGWII), 169 to 189 (IMFYGLVPIGAIVIIVAFFIF), 203 to 223 (LGAILSIVGFASLLYGVSEAG), 231 to 251 (IVLSTVIIGAIAIVAFVVQQL), 273 to 293 (VINIIITVALYTGMFLLPIYL), 306 to 326 (LLLLPGAIVMLIMSPISGILF), 334 to 354 (LAIIGLLVTVVTTYQYTQLTI), 361 to 381 (IMLIYSIRAFGMSLLMMPVMT), and 483 to 503 (INDAFMWATLFCVAGLILSIF).

This sequence belongs to the major facilitator superfamily. EmrB family.

Its subcellular location is the cell membrane. This is an uncharacterized protein from Bacillus subtilis (strain 168).